The following is a 127-amino-acid chain: Ribonuclease P protein component (127 aa).

The protein belongs to the RnpA family. In terms of assembly, consists of a catalytic RNA component (M1 or rnpB) and a protein subunit.

It carries out the reaction Endonucleolytic cleavage of RNA, removing 5'-extranucleotides from tRNA precursor.. Functionally, RNaseP catalyzes the removal of the 5'-leader sequence from pre-tRNA to produce the mature 5'-terminus. It can also cleave other RNA substrates such as 4.5S RNA. The protein component plays an auxiliary but essential role in vivo by binding to the 5'-leader sequence and broadening the substrate specificity of the ribozyme. This Synechococcus sp. (strain RCC307) protein is Ribonuclease P protein component.